The chain runs to 620 residues: Chaperone protein HscA homolog (620 aa).

Belongs to the heat shock protein 70 family.

Functionally, chaperone involved in the maturation of iron-sulfur cluster-containing proteins. Has a low intrinsic ATPase activity which is markedly stimulated by HscB. In Pseudomonas savastanoi pv. phaseolicola (strain 1448A / Race 6) (Pseudomonas syringae pv. phaseolicola (strain 1448A / Race 6)), this protein is Chaperone protein HscA homolog.